The sequence spans 707 residues: Choline transporter-like protein 4 (707 aa).

Topologically, residues 1-27 (MASEEYGEPAKHDPSFKGPIKKRGCTD) are cytoplasmic. The helical transmembrane segment at 28-48 (IICCVLFMVFLLGYMVVGILA) threads the bilayer. At 49-225 (WLYGDPRQVI…KIFEDFAKSW (177 aa)) the chain is on the extracellular side. N-linked (GlcNAc...) asparagine glycosylation is found at Asn62, Asn140, Asn176, Asn191, and Asn196. A helical membrane pass occupies residues 226-246 (PWIITALVIAMVVSLLFLILL). The Cytoplasmic segment spans residues 247-249 (RFT). Residues 250-270 (AGILVWVLIVGVIGVIGYGIY) traverse the membrane as a helical segment. The Extracellular portion of the chain corresponds to 271–305 (HCYMEYDTLNKQGVSVSDVGFTFNLGVYFRVKETW). The helical transmembrane segment at 306–326 (LAILIVLAVVEAILLLVLLFL) threads the bilayer. Topologically, residues 327–354 (RKRILIAIALIKEASKAIGHIMSSLFYP) are cytoplasmic. Residues 355–375 (LVTFVLLVVCVAYWGMTALYL) form a helical membrane-spanning segment. The Extracellular portion of the chain corresponds to 376-442 (ATSGAPIYRI…TNLFNLQIYN (67 aa)). N-linked (GlcNAc...) asparagine glycans are attached at residues Asn389, Asn397, and Asn401. Residues 443–463 (VIGFLWCINFVIALGQCVLAG) traverse the membrane as a helical segment. Topologically, residues 464 to 494 (AFASYYWAFHKPKDIPFFPVAESFMRTLRYH) are cytoplasmic. The helical transmembrane segment at 495–515 (TGSLAFGSLILTIVQLIRIIL) threads the bilayer. Residues 516–556 (EYVDHKLKGAQNPCTRFLLCCLKCCFWCLEKFIKFLNRNAY) lie on the Extracellular side of the membrane. The chain crosses the membrane as a helical span at residues 557-577 (IMIAVYGKNFCVSAKNAFKLL). Residues 578–593 (MRNIVRVVVLDKVTDL) are Cytoplasmic-facing. The helical transmembrane segment at 594–614 (LIFFGKLIVVGGVGVLAFFFF) threads the bilayer. The Extracellular segment spans residues 615–633 (SGRIPIPNDSFKSPTLNYY). N-linked (GlcNAc...) asparagine glycosylation is present at Asn622. A helical membrane pass occupies residues 634–654 (WIPIITVVLGSYMIAHGFFSV). Residues 655–707 (YNMCVDTLFLCFLEDLERNDGSQEKPYYMSKSLMSILNKKNRPPKSEEKKKKK) lie on the Cytoplasmic side of the membrane.

This sequence belongs to the CTL (choline transporter-like) family.

The protein localises to the membrane. It localises to the apical cell membrane. The enzyme catalyses choline(out) + n H(+)(in) = choline(in) + n H(+)(out). It catalyses the reaction thiamine diphosphate(out) = thiamine diphosphate(in). Functionally, choline transporter that seems to play a role in the choline-acetylcholine system and is required to the efferent innervation of hair cells in the olivocochlear bundle for the maintenance of physiological function of outer hair cells and the protection of hair cells from acoustic injury. Also described as a thiamine pyrophosphate transporter. Its function is as follows. Also described as a thiamine pyrophosphate transporter. The chain is Choline transporter-like protein 4 (slc44a4) from Xenopus laevis (African clawed frog).